The following is a 2798-amino-acid chain: Kinesin-like protein KIN-12F (2798 aa).

The interval 1–165 (MVRDLAAVRR…RPPMSSGQRG (165 aa)) is disordered. Composition is skewed to low complexity over residues 8 to 22 (VRRT…SSAS) and 31 to 58 (PVDA…QPPQ). Residues 210–547 (NVQVVIRVRP…LKFAQRARLI (338 aa)) enclose the Kinesin motor domain. 291–298 (GQTGSGKT) is a binding site for ATP. Acidic residues predominate over residues 600-615 (DVDDGTESMNMDEEND). The tract at residues 600–621 (DVDDGTESMNMDEENDNDAHDR) is disordered. Coiled-coil stretches lie at residues 792–835 (ELKR…HSSN), 890–987 (LAEE…HRRQ), 1014–1108 (LKRM…VMKE), 1281–1322 (QRAM…LKNE), and 2130–2333 (ELVD…VRQQ). A disordered region spans residues 2338–2359 (PSSGQATSSLEGGMGDFTDSSR). 2 coiled-coil regions span residues 2361 to 2427 (SREI…VKSD) and 2545 to 2758 (ESKE…LKLK). The segment at 2772–2798 (RSESSSLSSGRSRSPSVCRSPSISSFR) is disordered. The span at 2774–2798 (ESSSLSSGRSRSPSVCRSPSISSFR) shows a compositional bias: low complexity.

This sequence belongs to the TRAFAC class myosin-kinesin ATPase superfamily. Kinesin family. KIN-12 subfamily.

In Oryza sativa subsp. japonica (Rice), this protein is Kinesin-like protein KIN-12F.